The chain runs to 169 residues: Interleukin-2 (169 aa).

A signal peptide spans 1–20 (MYSMQLASCVTLTLVLLVNS). Threonine 23 carries an O-linked (GalNAc...) threonine glycan. An intrachain disulfide couples cysteine 92 to cysteine 140.

This sequence belongs to the IL-2 family. In terms of tissue distribution, produced by immune cells including dendritic cells. In contrast, macrophages do not produce IL2 upon bacterial stimulation.

It localises to the secreted. Functionally, cytokine produced by activated CD4-positive helper T-cells and to a lesser extend activated CD8-positive T-cells and natural killer (NK) cells that plays pivotal roles in the immune response and tolerance. Binds to a receptor complex composed of either the high-affinity trimeric IL-2R (IL2RA/CD25, IL2RB/CD122 and IL2RG/CD132) or the low-affinity dimeric IL-2R (IL2RB and IL2RG). Interaction with the receptor leads to oligomerization and conformation changes in the IL-2R subunits resulting in downstream signaling starting with phosphorylation of JAK1 and JAK3. In turn, JAK1 and JAK3 phosphorylate the receptor to form a docking site leading to the phosphorylation of several substrates including STAT5. This process leads to activation of several pathways including STAT, phosphoinositide-3-kinase/PI3K and mitogen-activated protein kinase/MAPK pathways. Functions as a T-cell growth factor and can increase NK-cell cytolytic activity as well. Promotes strong proliferation of activated B-cells and subsequently immunoglobulin production. Plays a pivotal role in regulating the adaptive immune system by controlling the survival and proliferation of regulatory T-cells, which are required for the maintenance of immune tolerance. Moreover, participates in the differentiation and homeostasis of effector T-cell subsets, including Th1, Th2, Th17 as well as memory CD8-positive T-cells. The polypeptide is Interleukin-2 (Il2) (Mus musculus (Mouse)).